Reading from the N-terminus, the 204-residue chain is Large ribosomal subunit protein uL4 (204 aa).

The tract at residues 49–90 is disordered; sequence KVKGMGEVSGTTKKPYRQKGTGSARQGSLRAPQYRTGGAVHG.

The protein belongs to the universal ribosomal protein uL4 family. Part of the 50S ribosomal subunit.

Functionally, one of the primary rRNA binding proteins, this protein initially binds near the 5'-end of the 23S rRNA. It is important during the early stages of 50S assembly. It makes multiple contacts with different domains of the 23S rRNA in the assembled 50S subunit and ribosome. Forms part of the polypeptide exit tunnel. The polypeptide is Large ribosomal subunit protein uL4 (Gluconacetobacter diazotrophicus (strain ATCC 49037 / DSM 5601 / CCUG 37298 / CIP 103539 / LMG 7603 / PAl5)).